The primary structure comprises 64 residues: Small ribosomal subunit protein bS21 (64 aa).

Belongs to the bacterial ribosomal protein bS21 family.

In Amoebophilus asiaticus (strain 5a2), this protein is Small ribosomal subunit protein bS21.